The primary structure comprises 134 residues: 6,7-dimethyl-8-ribityllumazine synthase (134 aa).

5-amino-6-(D-ribitylamino)uracil-binding positions include F12, 44–46 (VFD), and 68–70 (SVI). Position 73 to 74 (73 to 74 (ET)) interacts with (2S)-2-hydroxy-3-oxobutyl phosphate. H76 functions as the Proton donor in the catalytic mechanism. L101 contributes to the 5-amino-6-(D-ribitylamino)uracil binding site. (2S)-2-hydroxy-3-oxobutyl phosphate is bound at residue R116.

The protein belongs to the DMRL synthase family.

It carries out the reaction (2S)-2-hydroxy-3-oxobutyl phosphate + 5-amino-6-(D-ribitylamino)uracil = 6,7-dimethyl-8-(1-D-ribityl)lumazine + phosphate + 2 H2O + H(+). It functions in the pathway cofactor biosynthesis; riboflavin biosynthesis; riboflavin from 2-hydroxy-3-oxobutyl phosphate and 5-amino-6-(D-ribitylamino)uracil: step 1/2. Its function is as follows. Catalyzes the formation of 6,7-dimethyl-8-ribityllumazine by condensation of 5-amino-6-(D-ribitylamino)uracil with 3,4-dihydroxy-2-butanone 4-phosphate. This is the penultimate step in the biosynthesis of riboflavin. In Methanosarcina acetivorans (strain ATCC 35395 / DSM 2834 / JCM 12185 / C2A), this protein is 6,7-dimethyl-8-ribityllumazine synthase.